A 226-amino-acid polypeptide reads, in one-letter code: Orotate phosphoribosyltransferase (226 aa).

Residue Lys-30 coordinates 5-phospho-alpha-D-ribose 1-diphosphate. Residue 38 to 39 coordinates orotate; sequence FF. 5-phospho-alpha-D-ribose 1-diphosphate contacts are provided by residues 76 to 77, Arg-106, Lys-107, Lys-110, His-112, and 132 to 140; these read YK and DDVMTAGTA. Orotate-binding residues include Thr-136 and Arg-164.

Belongs to the purine/pyrimidine phosphoribosyltransferase family. PyrE subfamily. As to quaternary structure, homodimer.

The enzyme catalyses orotidine 5'-phosphate + diphosphate = orotate + 5-phospho-alpha-D-ribose 1-diphosphate. Its pathway is pyrimidine metabolism; UMP biosynthesis via de novo pathway; UMP from orotate: step 1/2. In terms of biological role, catalyzes the transfer of a ribosyl phosphate group from 5-phosphoribose 1-diphosphate to orotate, leading to the formation of orotidine monophosphate (OMP). The protein is Orotate phosphoribosyltransferase (URA5) of Kluyveromyces lactis (strain ATCC 8585 / CBS 2359 / DSM 70799 / NBRC 1267 / NRRL Y-1140 / WM37) (Yeast).